The following is a 131-amino-acid chain: C-type natriuretic peptide 1 (131 aa).

The N-terminal stretch at Met-1 to Ala-22 is a signal peptide. A propeptide spanning residues Arg-23–Arg-109 is cleaved from the precursor. Cysteines 115 and 131 form a disulfide.

This sequence belongs to the natriuretic peptide family. As to expression, brain and spinal cord.

It is found in the secreted. In terms of biological role, exhibits natriuretic and vasodepressant activity. Has cGMP-stimulating activity. May help to regulate body fluid homeostasis in a variety of aquatic environments. In Oryzias latipes (Japanese rice fish), this protein is C-type natriuretic peptide 1.